We begin with the raw amino-acid sequence, 418 residues long: MTLLALGINHKTAPVSLRERVSFSPDKLDQALDSLLAQPMVQGGVVLSTCNRTELYLSVEEQDNLQEALIRWLCDYHNLNEEDLRKSLYWHQDNDAVSHLMRVASGLDSLVLGEPQILGQVKKAFADSQKGHMKASELERMFQKSFSVAKRVRTETDIGASAVSVAFAACTLARQIFESLSTVTVLLVGAGETIELVARHLREHKVQKMIIANRTRERAQILADEVGAEVIALSEIDERLREADIIISSTASPLPIIGKGMVERALKSRRNQPMLLVDIAVPRDVEPEVGKLANAYLYSVDDLQSIISHNLAQRKAAAVEAETIVAQETSEFMAWLRAQSASETIREYRSQAEHVRDELTAKALAALEQGGDAQAIMQDLAWKLTNRLIHAPTKSLQQAARDGDNERLNILRDSLGLE.

Substrate is bound by residues Thr49–Arg52, Ser109, Glu114–Gln116, and Gln120. The active-site Nucleophile is Cys50. Gly189–Ile194 serves as a coordination point for NADP(+).

This sequence belongs to the glutamyl-tRNA reductase family. In terms of assembly, homodimer.

The enzyme catalyses (S)-4-amino-5-oxopentanoate + tRNA(Glu) + NADP(+) = L-glutamyl-tRNA(Glu) + NADPH + H(+). Its pathway is porphyrin-containing compound metabolism; protoporphyrin-IX biosynthesis; 5-aminolevulinate from L-glutamyl-tRNA(Glu): step 1/2. Catalyzes the NADPH-dependent reduction of glutamyl-tRNA(Glu) to glutamate 1-semialdehyde (GSA). The sequence is that of Glutamyl-tRNA reductase from Escherichia coli O139:H28 (strain E24377A / ETEC).